Reading from the N-terminus, the 941-residue chain is MSSAPPFAAALAWSGHLRRRLDAHPDLAAWLANACAHPVSANVLAAWQAELSGPDAPEVLPVEQCRGMLRKLRERVFLTLIVRDLGGQADLEEVVGAMTVLADIAVGTAYRSVAAELAAVHGLPREQSTGDPQEMLIVGMGKLGGRELNVSSDIDLVMLYGDEGETDGPRRISNHEFYGRLTRRMMPVLSEVDADGQVFRTDLRLRPDGDAGPLAWSLDALEHYLIGQGREWERYAWLKARLMPAQAFADSNPDAQARQLESLRVPFVYRKYFDFDALAALRALRERIRQDWQRRALARNGVDSANNIKLGDGGIREIEFIVQLSQLIRGGRMPALQRRGLLEALHAERAAGLVPEGDAQKLEAAYRFLRRTEHALQYREDEQTHLLPADPAQRAALAAALGYEPAAFERTLAEHRAFVSQTFRNAFRLAGMGEEDDSPAPARTHANGHAMRPHAGALHDIEERLAGQIQRDFPEHAEDLLRRTETLLGSHRVRSLPDSSRHRLEALLPAALTAATQTSAPMDAALRLFDLIETIAQRSAYLALLAEYPDTLARVARMVAASPWAAQYLTQHPLLLDSLIDWRTLFEPLDFAQVAHQLAADLDACRLPDGEPDIERQMNLMRDVQRQASFQLLAQDLEGELTVEKLADQLSALADLLLAETIRRVWPLVNRRPGAEPHLAVIAYGKLGGKELGYASDLDLVFLFDDDREDAAELYAKLGRRMTSWLSTMTSSGRLYEVDLRLRPDGNAGLLAVSLEAFEQYQRSHAWPWEHQALTRARYAAGDTEAGARFERIRADILVMPRDVQALRGEVLGMRDKISAGHPNRSELFDVKHDRGGMVGVEFVTQYLVLCHAATHRVLVNNLGNIALLRLAGEAGLIPAPLALAAGDAYRTLRRAQHQLRLKGVDKARVPPGQLAAERATVCELWQTVLQDGTIAQAEVK.

Residues 1–431 (MSSAPPFAAA…TFRNAFRLAG (431 aa)) are adenylyl removase. Positions 447–941 (NGHAMRPHAG…DGTIAQAEVK (495 aa)) are adenylyl transferase.

This sequence belongs to the GlnE family. Mg(2+) serves as cofactor.

The catalysed reaction is [glutamine synthetase]-O(4)-(5'-adenylyl)-L-tyrosine + phosphate = [glutamine synthetase]-L-tyrosine + ADP. It carries out the reaction [glutamine synthetase]-L-tyrosine + ATP = [glutamine synthetase]-O(4)-(5'-adenylyl)-L-tyrosine + diphosphate. Involved in the regulation of glutamine synthetase GlnA, a key enzyme in the process to assimilate ammonia. When cellular nitrogen levels are high, the C-terminal adenylyl transferase (AT) inactivates GlnA by covalent transfer of an adenylyl group from ATP to specific tyrosine residue of GlnA, thus reducing its activity. Conversely, when nitrogen levels are low, the N-terminal adenylyl removase (AR) activates GlnA by removing the adenylyl group by phosphorolysis, increasing its activity. The regulatory region of GlnE binds the signal transduction protein PII (GlnB) which indicates the nitrogen status of the cell. This chain is Bifunctional glutamine synthetase adenylyltransferase/adenylyl-removing enzyme, found in Bordetella pertussis (strain Tohama I / ATCC BAA-589 / NCTC 13251).